A 243-amino-acid chain; its full sequence is UDP-2,3-diacylglucosamine hydrolase (243 aa).

Mn(2+) contacts are provided by Asp8, His10, Asp41, Asn79, and His114. 79–80 (NR) serves as a coordination point for substrate. 4 residues coordinate substrate: Asp122, Lys164, Lys167, and His195. Mn(2+) is bound by residues His195 and His197.

It belongs to the LpxH family. Mn(2+) serves as cofactor.

The protein localises to the cell inner membrane. The enzyme catalyses UDP-2-N,3-O-bis[(3R)-3-hydroxytetradecanoyl]-alpha-D-glucosamine + H2O = 2-N,3-O-bis[(3R)-3-hydroxytetradecanoyl]-alpha-D-glucosaminyl 1-phosphate + UMP + 2 H(+). Its pathway is glycolipid biosynthesis; lipid IV(A) biosynthesis; lipid IV(A) from (3R)-3-hydroxytetradecanoyl-[acyl-carrier-protein] and UDP-N-acetyl-alpha-D-glucosamine: step 4/6. Hydrolyzes the pyrophosphate bond of UDP-2,3-diacylglucosamine to yield 2,3-diacylglucosamine 1-phosphate (lipid X) and UMP by catalyzing the attack of water at the alpha-P atom. Involved in the biosynthesis of lipid A, a phosphorylated glycolipid that anchors the lipopolysaccharide to the outer membrane of the cell. This Vibrio vulnificus (strain CMCP6) protein is UDP-2,3-diacylglucosamine hydrolase.